The primary structure comprises 258 residues: uncharacterized protein (258 aa).

ATP is bound at residue 36 to 43; that stretch reads GKAGTGKS.

This sequence belongs to the IIV-6 075L family.

This is an uncharacterized protein from Acheta domesticus (House cricket).